The chain runs to 85 residues: MAKEELLEMRGKVVELLPNAMFRVELENGHEVLGHTAGKMRKNRIRVLVGDEVLCELTPYDLTKARITYRFMPGRGGPGQGPGPQ.

Residues 1–72 (MAKEELLEMR…TKARITYRFM (72 aa)) form the S1-like domain.

This sequence belongs to the IF-1 family. In terms of assembly, component of the 30S ribosomal translation pre-initiation complex which assembles on the 30S ribosome in the order IF-2 and IF-3, IF-1 and N-formylmethionyl-tRNA(fMet); mRNA recruitment can occur at any time during PIC assembly.

The protein localises to the cytoplasm. Functionally, one of the essential components for the initiation of protein synthesis. Stabilizes the binding of IF-2 and IF-3 on the 30S subunit to which N-formylmethionyl-tRNA(fMet) subsequently binds. Helps modulate mRNA selection, yielding the 30S pre-initiation complex (PIC). Upon addition of the 50S ribosomal subunit IF-1, IF-2 and IF-3 are released leaving the mature 70S translation initiation complex. This Erythrobacter litoralis (strain HTCC2594) protein is Translation initiation factor IF-1.